A 94-amino-acid polypeptide reads, in one-letter code: Large ribosomal subunit protein uL23 (94 aa).

Belongs to the universal ribosomal protein uL23 family. Part of the 50S ribosomal subunit. Contacts protein L29, and trigger factor when it is bound to the ribosome.

Its function is as follows. One of the early assembly proteins it binds 23S rRNA. One of the proteins that surrounds the polypeptide exit tunnel on the outside of the ribosome. Forms the main docking site for trigger factor binding to the ribosome. The protein is Large ribosomal subunit protein uL23 of Phytoplasma australiense.